We begin with the raw amino-acid sequence, 180 residues long: UPF0340 protein LL0489 (180 aa).

It belongs to the UPF0340 family.

The sequence is that of UPF0340 protein LL0489 (yeiF) from Lactococcus lactis subsp. lactis (strain IL1403) (Streptococcus lactis).